Here is a 527-residue protein sequence, read N- to C-terminus: Berberine bridge enzyme-like 5 (527 aa).

The N-terminal stretch at 1–19 is a signal peptide; sequence MKALFSVLCLVLLVSILRA. Residues Cys-32 and Cys-95 are joined by a disulfide bond. Asn-35 and Asn-52 each carry an N-linked (GlcNAc...) asparagine glycan. The FAD-binding PCMH-type domain occupies 73 to 247; that stretch reads NYQKLVAIVA…LSWKINLVEV (175 aa). A cross-link (6-(S-cysteinyl)-8alpha-(pros-histidyl)-FAD (His-Cys)) is located at residues 110–172; sequence HDYEGLSYTS…QTLAFPAGVC (63 aa). Asn-341 is a glycosylation site (N-linked (GlcNAc...) asparagine).

This sequence belongs to the oxygen-dependent FAD-linked oxidoreductase family. It depends on FAD as a cofactor. In terms of processing, the FAD cofactor is bound via a bicovalent 6-S-cysteinyl, 8alpha-N1-histidyl FAD linkage.

It is found in the secreted. The protein localises to the cell wall. Its function is as follows. Probable flavin-dependent oxidoreductase. The chain is Berberine bridge enzyme-like 5 from Arabidopsis thaliana (Mouse-ear cress).